Here is a 151-residue protein sequence, read N- to C-terminus: Ubiquitin-like protein 4A-B (151 aa).

In terms of domain architecture, Ubiquitin-like spans 1 to 76; that stretch reads MILTIKPLKG…LNLVVRPAGE (76 aa).

As to quaternary structure, component of the BAT3 complex.

The protein resides in the cytoplasm. Its subcellular location is the cytosol. Functionally, component of the BAT3 complex, a multiprotein complex involved in the post-translational delivery of tail-anchored (TA) membrane proteins to the endoplasmic reticulum membrane. TA membrane proteins, also named type II transmembrane proteins, contain a single C-terminal transmembrane region. This chain is Ubiquitin-like protein 4A-B (ubl4ab), found in Oncorhynchus mykiss (Rainbow trout).